The following is a 278-amino-acid chain: Beta-lactamase-like protein str5 (278 aa).

A helical membrane pass occupies residues 20 to 37 (VFVLAALLSATFAFFTHT). N-linked (GlcNAc...) asparagine glycosylation occurs at Asn112.

Belongs to the beta-lactamase family.

It localises to the membrane. It participates in mycotoxin biosynthesis. Beta-lactamase-like protein; part of the gene cluster that mediates the biosynthesis of strobilurin A, an antifungal polyketide that contains a key beta-methoxyacrylate toxophore that targets the complex III of the mitochondrial electron transport chain. Strobilurin biosynthesis begins with construction of benzoyl CoA by step-wise elimination of ammonia from phenylalanine by the phenylalanine ammonia-lyase str11, oxygenation by str8 and retro-Claisen reaction to form benzoic acid, which is activated to its CoA thiolester benzoyl CoA by the dedicated CoA ligase str10. Benzoyl CoA forms the starter unit for the highly reducing polyketide synthase stpks1 that produces the polyketide prestrobilutin A. The FAD-dependent oxygenase str9 then catalyzes the key oxidative rearrangement responsible for the creation of the beta-methoxyacrylate toxophore. Str9 performs epoxidation of the 2,3 olefin of prestrobilutin A, followed by Meinwald rearrangement to furnish the aldehyde intermediate. Rapid enolization of the aldehyde intermediate would give the beta-methoxyacrylate skeleton and methylations catalyzed by str2 and str3 complete the synthesis and lead to the production of strobilurin A. The short-chain dehydrogenase stl2 and the dehydrogenase str4 play a role in the shunt pathway leading to the production of bolineol. The cluster encodes no obvious halogenase gene that could be involved in production of strobilurin B, nor any obvious dimethylallyl-transferase that could be involved in the production of strobilurin G. It is possible that unknown proteins encoded in, or near, the cluster (such as str1 or stl1) may form new classes of halogenases or dimethylally-transferases, or that the responsible genes are located elsewhere on the genome. Similarly, proteins encoded by str5/str6 hydrolases appear to have no chemical role in the biosynthesis of strobilurin A. Finally, no obvious self-resistance gene is found within the cluster. This is Beta-lactamase-like protein str5 from Strobilurus tenacellus.